The primary structure comprises 3357 residues: MLINMKGILWMCSTLLLTHALHQAKMETSPPVKGSLSGKVVLPCHFSTLPTLPPNYNTSEFLRIKWSKMEVDKNGKDIKETTVLVAQNGNIKIGQDYKGRVSVPTHPDDVGDASLTMVKLRASDAAVYRCDVMYGIEDTQDTMSLAVDGVVFHYRAATSRYTLNFAAAQQACLDIGAVIASPEQLFAAYEDGFEQCDAGWLSDQTVRYPIRAPREGCYGDMMGKEGVRTYGFRSPQETYDVYCYVDHLDGDVFHITAPSKFTFEEAEAECTSRDARLATVGELQAAWRNGFDQCDYGWLSDASVRHPVTVARAQCGGGLLGVRTLYRFENQTCFPLPDSRFDAYCFKPKQNISEATTIEMNILAETSSPSLSKEPHMVPDRATPVIPLATELPIFTTHFPPAGNIVNSEQKSVVYSQAITGRLATESPTTTRNTINSWDLNDSLASGSGPLGMPDISEIKEEELRSTTVISQHATGSQAVITEDTQTHESVSQIEQIEVGPLVTSMEITNHISLKELPEKNKTPYESTEVTLEHTTEMPTVSASPELATTSHYGFTLREDDREDRTLTVRSDQSTRVFSQIPEVITVSKTSEDTTYSQLGDLESISTSTITMLGTDRSLIDKEKEPKTNGKVTEDEFGQSQPTTTFPSQHLTEVELLPYSGDTTSVEGISTVIYPSLQTDVTQGRERTETPRPELKKDPYTVDEIPEKVTKDPFIGKTEEVFSGMPLSTSSSESSVERTESVSPALTIEKLTGKPTEARDVEEMTTLTRLETDVTKSDKDVTRVHLTHSTLNVEVVTVSKWPGDEDNSTSKPLPSTEHAGFTKLPPVPLSTIGINGKDKEIPSFTDGGGEYTLFPDGTPKPLEKVSEEDLASGELTVTFHTSTSIGSAEKSASGEPTTGDRFLPTTSTEDQVINATAEGSALGEDTEASKPLFTGPPFVHTSDVEELAFVNYSSTQEPTTYVDISHTSPLSIIPKTEWSVLETSVPLEDEILGKSDQDILEQTHLEATMSPGALRTTGVSQGETQEEPQTPGSPFPTFSSTAVMAKETTAFEEGEGSTYTPSEGRLMTGSERVPGLETTPVGTSYPPGAITDQEVEMDTMVTLMSTIRPTVVSSTESEVIYEAEGSSPTEFASTLRPFQTHVTQLMEETTEEGKKASLDYTDLGSGLFEPRATELPKFPSTPSDISVFTAIDSLHRTPPLSPSSSFTEEQRVFEEESSEKTTGDILPGESVTQHPVTTLIDIVAMKTESDIDHMTSKPPVTQPTRPSVVERKTTSKTQELSTSTPAAGTKFHPDINVYIIEVRENKTGRLSDMIVSGHPIDSESKEEEPCSEETDPLHDLFAEILPELPDSFEIDIYHSEEDEDGEEDCVNATDVTTTPSVQYINGKQLVTTVPKDPEAAEARRGQYESVAPSQNFPDSSATDTHQFILAETESSTTMQFKKSKEGTELLEITWKPETYPETPDHVSSGEPDVFPTLSSHDGKTTRWSESITESSPNLENPVHKQPKPVPLFPEESSGEGAIEQASQETILSRATEVALGKETDQSPTLSTSSILSSSVSVNVLEEEPLTLTGISQTDESMSTIESWVEITPSQTVKFSESSSAPIIEGSGEVEENKNKIFNMVTDLPQRDPTDTLSPLDMSKIMITNHHIYIPATIAPLDSKLPSPDARPTTVWNSNSTSEWVSDKSFEGRKKKENEDEEGAVNAAHQGEVRAATERSDHLLLTPELESSNVDASSDLATWEGFILETTPTESEKEMANSTPVFRETIGVANVEAQPFEHSSSSHPRVQEELTTLSGNPPSLFTDLGSGDASTGMELITASLFTLDLESETKVKKELPSTPSPSVEISSSFEPTGLTPSTVLDIEIAGVMSQTSQKTLISEISGKPTSQSGVRDLYTGFPMGEDFSGDFSEYPTVSYPTMKEETVGMGGSDDERVRDTQTSSSIPTTSDNIYPVPDSKGPDSTVASTTAFPWEEVMSSAEGSGEQLASVRSSVGPVLPLAVDIFSGTESPYFDEEFEEVAAVTEANERPTVLPTAASGNTVDLTENGYIEVNSTMSLDFPQTMEPSKLWSKPEVNLDKQEIGRETVTKEKAQGQKTFESLHSSFAPEQTILETQSLIETEFQTSDYSMLTTLKTYITNKEVEEEGMSIAHMSTPGPGIKDLESYTTHPEAPGKSHSFSATALVTESGAARSVLMDSSTQEEESIKLFQKGVKLTNKESNADLSFSGLGSGGALPPLPTTSVNLTDMKQIISTLYAETSHMESLGTSILGDKMEDHERMEDVSSNEVRMLISKIGSISQDSTEALDTTLSHTGTEEPTTSTLPFVKLMDLERSPKQDPSGGKRKPKTHRPQTMSGLISNENSSASEAEEGATSPTAFLPQTYSVEMTKHFAPSESQPSDLFNVNSGEGSGEVDTLDLVYTSGTTQASSQGDSMLASHGFLEKHPEVSKTEAGATDVSPTASAMFLHHSEYKSSLYPTSTLPSTEPYKSPSEGIEDGLQDNIQFEGSTLKPSRRKTTESIIIDLDKEDSKDLGLTITESAIVKSLPELTSDKNIIIDIDHTKPVYEYIPGIQTDLDPEIKLESHGSSEESLQVQEKYEGAVTLSPTEESFEGSGDALLAGYTQAIYNESVTPNDGKQAEDISFSFATGIPVSSTETELHTFFPTASTLHIPSKLTTASPEIDKPNIEAISLDDIFESSTLSDGQAIADQSEVISTLGHLEKTQEEYEEKKYGGPSFQPEFFSGVGEVLTDPPAYVSIGSTYLIAQTLTELPNVVRPSDSTHYTEATPEVSSLAELSPQIPSSPFPVYVDNGVSKFPEVPHTSAQPVSTVTSSQKSIESPFKEVHANIEETIKPLGGNVHRTEPPSMSRDPALDVSEDESKHKLLEELETSPTKPETSQDFPNKAKDHIPGETVGMLAGIRTTESEPVITADDMELGGATQQPHSASAAFRVETGMVPQPIQQEPERPTFPSLEINHETHTSLFGESILATSEKQVSQKILDNSNQATVSSTLDLHTAHALSPFSILDNSNETAFLIGISEESVEGTAVYLPGPDLCKTNPCLNGGTCYPTETSYVCTCAPGYSGDQCELDFDECHSNPCRNGATCVDGFNTFRCLCLPSYVGALCEQDTETCDYGWHKFQGQCYKYFAHRRTWDAAERECRLQGAHLTSILSHEEQMFVNRVGHDYQWIGLNDKMFEHDFRWTDGSALQYENWRPNQPDSFFSAGEDCVVIIWHENGQWNDVPCNYHLTYTCKKGTVACGQPPVVENAKTFGKMKPRYEINSLIRYHCKDGFIQRHLPTIRCLGNGRWAMPKITCMNPSAYQRTYSKKYLKNSSSAKDNSINTSKHEHRWSRRQETRR.

Residues 1–23 (MLINMKGILWMCSTLLLTHALHQ) form the signal peptide. An Ig-like V-type domain is found at 24–146 (AKMETSPPVK…EDTQDTMSLA (123 aa)). 5 disulfides stabilise this stretch: cysteine 44/cysteine 130, cysteine 172/cysteine 243, cysteine 196/cysteine 217, cysteine 270/cysteine 333, and cysteine 294/cysteine 315. A glycan (N-linked (GlcNAc...) asparagine) is linked at asparagine 57. 2 Link domains span residues 150–245 (VVFH…YCYV) and 251–347 (DVFH…YCFK). Asparagine 330, asparagine 351, and asparagine 441 each carry an N-linked (GlcNAc...) asparagine glycan. Residues 348–1308 (PKQNISEATT…IIEVRENKTG (961 aa)) form a GAG-alpha (glucosaminoglycan attachment domain) region. Residues 625–634 (EPKTNGKVTE) show a composition bias toward basic and acidic residues. The interval 625-646 (EPKTNGKVTEDEFGQSQPTTTF) is disordered. An O-linked (Xyl...) (chondroitin sulfate) serine glycan is attached at serine 660. Disordered stretches follow at residues 801–863 (WPGD…KPLE) and 881–908 (TSTSIGSAEKSASGEPTTGDRFLPTTST). Asparagine 807 carries an N-linked (GlcNAc...) asparagine glycan. N-linked (GlcNAc...) asparagine glycosylation is found at asparagine 914 and asparagine 951. Disordered stretches follow at residues 1010-1088 (SPGA…YPPG) and 1252-1288 (DHMTSKPPVTQPTRPSVVERKTTSKTQELSTSTPAAG). 2 stretches are compositionally biased toward polar residues: residues 1017–1042 (TGVSQGETQEEPQTPGSPFPTFSSTA) and 1275–1286 (SKTQELSTSTPA). N-linked (GlcNAc...) asparagine glycans are attached at residues asparagine 1305 and asparagine 1371. The GAG-beta stretch occupies residues 1309-3051 (RLSDMIVSGH…VEGTAVYLPG (1743 aa)). The span at 1396-1406 (DPEAAEARRGQ) shows a compositional bias: basic and acidic residues. Disordered stretches follow at residues 1396–1421 (DPEAAEARRGQYESVAPSQNFPDSSA) and 1458–1524 (TYPE…AIEQ). Composition is skewed to polar residues over residues 1411–1421 (APSQNFPDSSA) and 1487–1498 (WSESITESSPNL). Residues serine 1517 and serine 1599 are each glycosylated (O-linked (Xyl...) (chondroitin sulfate) serine). A disordered region spans residues 1664 to 1705 (LPSPDARPTTVWNSNSTSEWVSDKSFEGRKKKENEDEEGAVN). A compositionally biased stretch (polar residues) spans 1673–1683 (TVWNSNSTSEW). Asparagine 1678 is a glycosylation site (N-linked (GlcNAc...) asparagine). Residues 1684-1697 (VSDKSFEGRKKKEN) show a composition bias toward basic and acidic residues. O-linked (Xyl...) (chondroitin sulfate) serine glycans are attached at residues serine 1907 and serine 1931. Residues 1926-1965 (VGMGGSDDERVRDTQTSSSIPTTSDNIYPVPDSKGPDSTV) form a disordered region. Over residues 1939–1951 (TQTSSSIPTTSDN) the composition is skewed to polar residues. The N-linked (GlcNAc...) asparagine glycan is linked to asparagine 2053. O-linked (Xyl...) (chondroitin sulfate) serine glycans are attached at residues serine 2219 and serine 2226. Asparagine 2243 carries N-linked (GlcNAc...) asparagine glycosylation. Residues 2308 to 2322 (TLSHTGTEEPTTSTL) are compositionally biased toward polar residues. Disordered regions lie at residues 2308 to 2374 (TLSH…ATSP) and 2475 to 2494 (YPTSTLPSTEPYKSPSEGIE). N-linked (GlcNAc...) asparagine glycosylation is present at asparagine 2361. Residues 2475–2486 (YPTSTLPSTEPY) show a composition bias toward low complexity. Phosphoserine is present on residues serine 2585 and serine 2586. An N-linked (GlcNAc...) asparagine glycan is attached at asparagine 2626. O-linked (Xyl...) (chondroitin sulfate) serine glycosylation is found at serine 2696, serine 2697, and serine 2741. Residues 2853-2908 (LGGNVHRTEPPSMSRDPALDVSEDESKHKLLEELETSPTKPETSQDFPNKAKDHIP) are disordered. Over residues 2888-2899 (TSPTKPETSQDF) the composition is skewed to polar residues. The N-linked (GlcNAc...) asparagine glycan is linked to asparagine 3029. Residues 3051-3087 (GPDLCKTNPCLNGGTCYPTETSYVCTCAPGYSGDQCE) form the EGF-like 1 domain. 11 cysteine pairs are disulfide-bonded: cysteine 3055–cysteine 3066, cysteine 3060–cysteine 3075, cysteine 3077–cysteine 3086, cysteine 3093–cysteine 3104, cysteine 3098–cysteine 3113, cysteine 3115–cysteine 3124, cysteine 3131–cysteine 3142, cysteine 3159–cysteine 3251, cysteine 3227–cysteine 3243, cysteine 3258–cysteine 3301, and cysteine 3287–cysteine 3314. The 37-residue stretch at 3089 to 3125 (DFDECHSNPCRNGATCVDGFNTFRCLCLPSYVGALCE) folds into the EGF-like 2; calcium-binding domain. The C-type lectin domain occupies 3138 to 3252 (FQGQCYKYFA…CNYHLTYTCK (115 aa)). The region spanning 3256 to 3316 (VACGQPPVVE…WAMPKITCMN (61 aa)) is the Sushi domain. Asparagine 3331 and asparagine 3341 each carry an N-linked (GlcNAc...) asparagine glycan. Residues 3331-3342 (NSSSAKDNSINT) are compositionally biased toward polar residues. The disordered stretch occupies residues 3331-3357 (NSSSAKDNSINTSKHEHRWSRRQETRR).

The protein belongs to the aggrecan/versican proteoglycan family. As to quaternary structure, interacts with FBLN1. Phosphorylated by FAM20C in the extracellular medium. In terms of processing, proteolytically cleaved by ADAMTS5 and ADAMTS15 in the pericellular matrix surrounding myoblasts, facilitating myoblast contact and fusion which is required for skeletal muscle development and regeneration. In terms of tissue distribution, expressed in the retina (at protein level). Isoform V2: Only expressed in brain.

Its subcellular location is the secreted. It localises to the extracellular space. The protein resides in the extracellular matrix. The protein localises to the cell projection. It is found in the cilium. Its subcellular location is the photoreceptor outer segment. It localises to the interphotoreceptor matrix. Its function is as follows. May play a role in intercellular signaling and in connecting cells with the extracellular matrix. May take part in the regulation of cell motility, growth and differentiation. Binds hyaluronic acid. This Mus musculus (Mouse) protein is Versican core protein (Vcan).